Consider the following 345-residue polypeptide: L-threonine 3-dehydrogenase (345 aa).

C38 is a Zn(2+) binding site. Catalysis depends on charge relay system residues T40 and H43. Positions 63, 64, 93, 96, 99, and 107 each coordinate Zn(2+). Residues I176, D196, R201, 263-265 (LGT), and 287-288 (VT) each bind NAD(+).

It belongs to the zinc-containing alcohol dehydrogenase family. In terms of assembly, homotetramer. Requires Zn(2+) as cofactor.

The protein resides in the cytoplasm. It catalyses the reaction L-threonine + NAD(+) = (2S)-2-amino-3-oxobutanoate + NADH + H(+). It participates in amino-acid degradation; L-threonine degradation via oxydo-reductase pathway; glycine from L-threonine: step 1/2. Its function is as follows. Catalyzes the NAD(+)-dependent oxidation of L-threonine to 2-amino-3-ketobutyrate. This is L-threonine 3-dehydrogenase from Cutibacterium acnes (strain DSM 16379 / KPA171202) (Propionibacterium acnes).